The chain runs to 160 residues: Suppressyn (160 aa).

An N-terminal signal peptide occupies residues 1 to 39 (MACIYPTTFYTSLPTKSLNMGISLTTILILSVAVLLSTA). The disordered stretch occupies residues 137 to 160 (AKASKPTTPPENRPRHFHSFIQKL).

As to quaternary structure, interacts (secreted) with SLC1A5; mainly at cell surface. Specifically expressed in placenta by extravillous trophoblasts and syncytiotrophoblasts (at protein level).

It is found in the secreted. May play a role in trophoblasts syncytialization, the spontaneous fusion of their plasma membranes, an essential process in placental development. May negatively regulate cell-cell fusion by interacting with SLC1A5, the probable receptor on the cell surface of the fusogenic syncytin-1/ERVW-1. The polypeptide is Suppressyn (ERVH48-1) (Homo sapiens (Human)).